Consider the following 145-residue polypeptide: Large ribosomal subunit protein uL13 (145 aa).

The protein belongs to the universal ribosomal protein uL13 family. Part of the 50S ribosomal subunit.

Its function is as follows. This protein is one of the early assembly proteins of the 50S ribosomal subunit, although it is not seen to bind rRNA by itself. It is important during the early stages of 50S assembly. This chain is Large ribosomal subunit protein uL13, found in Brevibacillus brevis (strain 47 / JCM 6285 / NBRC 100599).